A 158-amino-acid polypeptide reads, in one-letter code: Transcription elongation factor GreA (158 aa).

It belongs to the GreA/GreB family.

Functionally, necessary for efficient RNA polymerase transcription elongation past template-encoded arresting sites. The arresting sites in DNA have the property of trapping a certain fraction of elongating RNA polymerases that pass through, resulting in locked ternary complexes. Cleavage of the nascent transcript by cleavage factors such as GreA or GreB allows the resumption of elongation from the new 3'terminus. GreA releases sequences of 2 to 3 nucleotides. In Yersinia pestis, this protein is Transcription elongation factor GreA.